A 318-amino-acid polypeptide reads, in one-letter code: NADH-ubiquinone oxidoreductase chain 1 (318 aa).

Transmembrane regions (helical) follow at residues 2 to 22 (FMIN…FLTL), 68 to 88 (ITMF…MWTP), 100 to 120 (LGVL…LWSG), 146 to 166 (LAII…PALI), 171 to 191 (HMWL…STLA), 222 to 242 (LFFL…TILF), 253 to 273 (ELYT…FLWV), and 294 to 314 (LPLT…TAGI).

The protein belongs to the complex I subunit 1 family.

The protein localises to the mitochondrion inner membrane. It catalyses the reaction a ubiquinone + NADH + 5 H(+)(in) = a ubiquinol + NAD(+) + 4 H(+)(out). Its function is as follows. Core subunit of the mitochondrial membrane respiratory chain NADH dehydrogenase (Complex I) that is believed to belong to the minimal assembly required for catalysis. Complex I functions in the transfer of electrons from NADH to the respiratory chain. The immediate electron acceptor for the enzyme is believed to be ubiquinone. The chain is NADH-ubiquinone oxidoreductase chain 1 (MT-ND1) from Coelops frithii (East Asian tailless leaf-nosed bat).